We begin with the raw amino-acid sequence, 389 residues long: Tryptophan synthase beta chain (389 aa).

Lys84 carries the post-translational modification N6-(pyridoxal phosphate)lysine.

It belongs to the TrpB family. In terms of assembly, tetramer of two alpha and two beta chains. Pyridoxal 5'-phosphate is required as a cofactor.

It catalyses the reaction (1S,2R)-1-C-(indol-3-yl)glycerol 3-phosphate + L-serine = D-glyceraldehyde 3-phosphate + L-tryptophan + H2O. It functions in the pathway amino-acid biosynthesis; L-tryptophan biosynthesis; L-tryptophan from chorismate: step 5/5. Functionally, the beta subunit is responsible for the synthesis of L-tryptophan from indole and L-serine. The sequence is that of Tryptophan synthase beta chain from Methanococcus aeolicus (strain ATCC BAA-1280 / DSM 17508 / OCM 812 / Nankai-3).